Reading from the N-terminus, the 399-residue chain is Beta sliding clamp (399 aa).

Belongs to the beta sliding clamp family. In terms of assembly, forms a ring-shaped head-to-tail homodimer around DNA which binds and tethers DNA polymerases and other proteins to the DNA. The DNA replisome complex has a single clamp-loading complex (3 tau and 1 each of delta, delta', psi and chi subunits) which binds 3 Pol III cores (1 core on the leading strand and 2 on the lagging strand) each with a beta sliding clamp dimer. Additional proteins in the replisome are other copies of gamma, psi and chi, Ssb, DNA helicase and RNA primase.

It is found in the cytoplasm. In terms of biological role, confers DNA tethering and processivity to DNA polymerases and other proteins. Acts as a clamp, forming a ring around DNA (a reaction catalyzed by the clamp-loading complex) which diffuses in an ATP-independent manner freely and bidirectionally along dsDNA. Initially characterized for its ability to contact the catalytic subunit of DNA polymerase III (Pol III), a complex, multichain enzyme responsible for most of the replicative synthesis in bacteria; Pol III exhibits 3'-5' exonuclease proofreading activity. The beta chain is required for initiation of replication as well as for processivity of DNA replication. The chain is Beta sliding clamp (dnaN) from Mycobacterium leprae (strain TN).